Here is a 735-residue protein sequence, read N- to C-terminus: Catalase-peroxidase (735 aa).

A compositionally biased stretch (polar residues) spans 1 to 26; the sequence is MENQNRQNASQCPFHGSITNQSSNRT. Residues 1-29 are disordered; it reads MENQNRQNASQCPFHGSITNQSSNRTTNK. The segment at residues 100–223 is a cross-link (tryptophyl-tyrosyl-methioninium (Trp-Tyr) (with M-249)); it reads WHSAGTYRIG…LAASVMGLIY (124 aa). Catalysis depends on H101, which acts as the Proton acceptor. The segment at residues 223–249 is a cross-link (tryptophyl-tyrosyl-methioninium (Tyr-Met) (with W-100)); the sequence is YVNPEGPDGKPDPKAAARDIRETFRRM. Position 264 (H264) interacts with heme b.

The protein belongs to the peroxidase family. Peroxidase/catalase subfamily. Homodimer or homotetramer. It depends on heme b as a cofactor. Post-translationally, formation of the three residue Trp-Tyr-Met cross-link is important for the catalase, but not the peroxidase activity of the enzyme.

It carries out the reaction H2O2 + AH2 = A + 2 H2O. The catalysed reaction is 2 H2O2 = O2 + 2 H2O. Functionally, bifunctional enzyme with both catalase and broad-spectrum peroxidase activity. The protein is Catalase-peroxidase of Geobacillus thermodenitrificans (strain NG80-2).